We begin with the raw amino-acid sequence, 385 residues long: S-adenosylmethionine synthase (385 aa).

ATP is bound at residue His-16. Asp-18 is a binding site for Mg(2+). Position 44 (Glu-44) interacts with K(+). The L-methionine site is built by Glu-57 and Gln-100. Residues 100 to 110 form a flexible loop region; that stretch reads QSPDINQGVDR. ATP-binding positions include 164 to 166, 230 to 231, Asp-239, 245 to 246, Ala-262, and Lys-266; these read DGK, KF, and RK. Residue Asp-239 coordinates L-methionine. Lys-270 serves as a coordination point for L-methionine.

Belongs to the AdoMet synthase family. As to quaternary structure, homotetramer; dimer of dimers. Mg(2+) serves as cofactor. Requires K(+) as cofactor.

The protein localises to the cytoplasm. The catalysed reaction is L-methionine + ATP + H2O = S-adenosyl-L-methionine + phosphate + diphosphate. The protein operates within amino-acid biosynthesis; S-adenosyl-L-methionine biosynthesis; S-adenosyl-L-methionine from L-methionine: step 1/1. Catalyzes the formation of S-adenosylmethionine (AdoMet) from methionine and ATP. The overall synthetic reaction is composed of two sequential steps, AdoMet formation and the subsequent tripolyphosphate hydrolysis which occurs prior to release of AdoMet from the enzyme. The protein is S-adenosylmethionine synthase of Helicobacter pylori (strain ATCC 700392 / 26695) (Campylobacter pylori).